Here is a 66-residue protein sequence, read N- to C-terminus: Large ribosomal subunit protein uL29 (66 aa).

This sequence belongs to the universal ribosomal protein uL29 family.

The protein is Large ribosomal subunit protein uL29 of Thermotoga sp. (strain RQ2).